We begin with the raw amino-acid sequence, 415 residues long: Multidrug resistance protein MdtA (415 aa).

The first 21 residues, 1-21 (MKGSYKSRWVIVIVVVIAAIA), serve as a signal peptide directing secretion. Over residues 31-47 (DSQSAAPGATKQAQQSP) the composition is skewed to polar residues. Disordered regions lie at residues 31 to 60 (DSQS…GPLA) and 392 to 415 (EAQS…GARS). Over residues 399–415 (PEEKATSREYAKKGARS) the composition is skewed to basic and acidic residues.

It belongs to the membrane fusion protein (MFP) (TC 8.A.1) family. As to quaternary structure, part of a tripartite efflux system composed of MdtA, MdtB and MdtC.

The protein localises to the cell inner membrane. Its function is as follows. The MdtABC tripartite complex confers resistance against novobiocin and deoxycholate. This chain is Multidrug resistance protein MdtA, found in Escherichia coli O157:H7.